We begin with the raw amino-acid sequence, 614 residues long: UvrABC system protein C (614 aa).

The GIY-YIG domain occupies 14-91 (TSPGCYIHKD…IKENKPKYNI (78 aa)). A UVR domain is found at 196-231 (DKIIDDLKSKMAVAAQSMEFERAAEYRDLIQAIGTL). The segment at 595 to 614 (LPQVAEERVDYQTEGNHNEP) is disordered. The span at 599 to 614 (AEERVDYQTEGNHNEP) shows a compositional bias: basic and acidic residues.

Belongs to the UvrC family. As to quaternary structure, interacts with UvrB in an incision complex.

It is found in the cytoplasm. The UvrABC repair system catalyzes the recognition and processing of DNA lesions. UvrC both incises the 5' and 3' sides of the lesion. The N-terminal half is responsible for the 3' incision and the C-terminal half is responsible for the 5' incision. The chain is UvrABC system protein C from Streptococcus pneumoniae serotype 4 (strain ATCC BAA-334 / TIGR4).